Here is a 461-residue protein sequence, read N- to C-terminus: Fibrinogen C domain-containing protein 1 (461 aa).

The segment at 1–24 is disordered; that stretch reads MVNDRWKTMGGAAQLEDRPRDKPQ. The Cytoplasmic portion of the chain corresponds to 1–33; the sequence is MVNDRWKTMGGAAQLEDRPRDKPQRPSCGYVLC. Residues 15–24 show a composition bias toward basic and acidic residues; the sequence is LEDRPRDKPQ. The chain crosses the membrane as a helical; Signal-anchor for type II membrane protein span at residues 34–54; that stretch reads TVLLALAVLLAVAVTGAVLFL. At 55–461 the chain is on the extracellular side; it reads NHAHAPGTAP…MKIRPVREDR (407 aa). The disordered stretch occupies residues 214–238; the sequence is GRPRNKADLQRAPARGTRPRGCATG. The Fibrinogen C-terminal domain maps to 235 to 458; the sequence is CATGSRPRDC…FSEMKIRPVR (224 aa). The cysteines at positions 244 and 273 are disulfide-linked. Residue Asn340 is glycosylated (N-linked (GlcNAc...) asparagine). Residues Asp393 and Asp395 each contribute to the Ca(2+) site. A disulfide bridge links Cys401 with Cys414.

Homotetramer; disulfide-linked. In terms of tissue distribution, expressed in the small and large intestinal epithelial cells with a highly polarized localization to the apical surface corresponding to the brush border and in the ducts of the salivary gland.

The protein resides in the membrane. Its function is as follows. Acetyl group-binding receptor which shows a high-affinity and calcium-dependent binding to acetylated structures such as chitin, some N-acetylated carbohydrates, and amino acids, but not to their non-acetylated counterparts. Can facilitate the endocytosis of acetylated components. The polypeptide is Fibrinogen C domain-containing protein 1 (FIBCD1) (Homo sapiens (Human)).